Consider the following 339-residue polypeptide: MNQRNASMTVIGAGSYGTALAITLARNGHEVVLWGHDPEHIATLERDRCNAAFLPDVPFPDTLHLESDLATALAASRNILVVVPSHVFGEVLRQIKPLMRPDARLVWATKGLEAETGRLLQDVAREALGDQIPLAVISGPTFAKELAAGLPTAISLASTDQTFADDLQQLLHCGKSFRVYSNPDFIGVQLGGAVKNVIAIGAGMSDGIGFGANARTALITRGLAEMSRLGAALGADPATFMGMAGLGDLVLTCTDNQSRNRRFGMMLGQGMDVQSAQEKIGQVVEGYRNTKEVRELAHRFGVEMPITEEIYQVLYCGKNAREAALTLLGRARKDERSSH.

NADPH is bound by residues S15, Y16, H36, and K110. Sn-glycerol 3-phosphate contacts are provided by K110, G139, and T141. A143 is an NADPH binding site. Residues K195, D248, S258, R259, and N260 each contribute to the sn-glycerol 3-phosphate site. K195 functions as the Proton acceptor in the catalytic mechanism. An NADPH-binding site is contributed by R259. The NADPH site is built by V283 and E285.

Belongs to the NAD-dependent glycerol-3-phosphate dehydrogenase family.

It is found in the cytoplasm. The enzyme catalyses sn-glycerol 3-phosphate + NAD(+) = dihydroxyacetone phosphate + NADH + H(+). It catalyses the reaction sn-glycerol 3-phosphate + NADP(+) = dihydroxyacetone phosphate + NADPH + H(+). Its pathway is membrane lipid metabolism; glycerophospholipid metabolism. Catalyzes the reduction of the glycolytic intermediate dihydroxyacetone phosphate (DHAP) to sn-glycerol 3-phosphate (G3P), the key precursor for phospholipid synthesis. This chain is Glycerol-3-phosphate dehydrogenase [NAD(P)+], found in Shigella dysenteriae serotype 1 (strain Sd197).